We begin with the raw amino-acid sequence, 108 residues long: Nucleoid-associated protein BQ02190 (108 aa).

This sequence belongs to the YbaB/EbfC family. As to quaternary structure, homodimer.

It is found in the cytoplasm. Its subcellular location is the nucleoid. Its function is as follows. Binds to DNA and alters its conformation. May be involved in regulation of gene expression, nucleoid organization and DNA protection. This is Nucleoid-associated protein BQ02190 from Bartonella quintana (strain Toulouse) (Rochalimaea quintana).